Consider the following 386-residue polypeptide: 8-amino-7-oxononanoate synthase (386 aa).

R20 serves as a coordination point for substrate. Position 107–108 (107–108 (GY)) interacts with pyridoxal 5'-phosphate. Position 132 (H132) interacts with substrate. Positions 178, 206, and 234 each coordinate pyridoxal 5'-phosphate. At K237 the chain carries N6-(pyridoxal phosphate)lysine. T351 is a binding site for substrate.

The protein belongs to the class-II pyridoxal-phosphate-dependent aminotransferase family. BioF subfamily. In terms of assembly, homodimer. Requires pyridoxal 5'-phosphate as cofactor.

The catalysed reaction is 6-carboxyhexanoyl-[ACP] + L-alanine + H(+) = (8S)-8-amino-7-oxononanoate + holo-[ACP] + CO2. Its pathway is cofactor biosynthesis; biotin biosynthesis. Catalyzes the decarboxylative condensation of pimeloyl-[acyl-carrier protein] and L-alanine to produce 8-amino-7-oxononanoate (AON), [acyl-carrier protein], and carbon dioxide. This is 8-amino-7-oxononanoate synthase from Aromatoleum aromaticum (strain DSM 19018 / LMG 30748 / EbN1) (Azoarcus sp. (strain EbN1)).